Consider the following 507-residue polypeptide: Maturase K (507 aa).

It belongs to the intron maturase 2 family. MatK subfamily.

The protein resides in the plastid. Its subcellular location is the chloroplast. Usually encoded in the trnK tRNA gene intron. Probably assists in splicing its own and other chloroplast group II introns. The protein is Maturase K of Cryptomeria japonica (Japanese cedar).